A 1841-amino-acid polypeptide reads, in one-letter code: Sodium channel protein type 4 subunit alpha (1841 aa).

Over 1–131 (MASSSLPTLV…RVAIKVLIHA (131 aa)) the chain is Cytoplasmic. The segment covering 32-60 (AMEEEARLQRNKQMEIEEPERKPRSDLEA) has biased composition (basic and acidic residues). Residues 32-63 (AMEEEARLQRNKQMEIEEPERKPRSDLEAGKN) are disordered. The stretch at 113–448 (MLSPFSIVRR…VVAMAYAEQN (336 aa)) is one I repeat. A helical membrane pass occupies residues 132–150 (LFSMFIMITILTNCVFMTM). Over 151 to 157 (SNPPSWS) the chain is Extracellular. The chain crosses the membrane as a helical span at residues 158 to 178 (KDVEYTFTGIYTFESLIKMLA). The Cytoplasmic portion of the chain corresponds to 179-192 (RGFCIDDFTFLRDP). The chain crosses the membrane as a helical span at residues 193 to 210 (WNWLDFSVITMAYVTEFV). Over 211-216 (DLGNIS) the chain is Extracellular. Residue N214 is glycosylated (N-linked (GlcNAc...) asparagine). A helical transmembrane segment spans residues 217 to 233 (ALRTFRVLRALKTITVI). The Cytoplasmic portion of the chain corresponds to 234–252 (PGLKTIVGALIQSVKKLSD). A helical transmembrane segment spans residues 253 to 272 (VMILTVFCLSVFALVGLQLF). Topologically, residues 273–385 (MGNLRQKCVR…PNYGYTSYDT (113 aa)) are extracellular. The cysteines at positions 280 and 354 are disulfide-linked. 7 N-linked (GlcNAc...) asparagine glycosylation sites follow: N288, N291, N297, N303, N315, N327, and N356. C363 and C369 are disulfide-bonded. The segment at residues 386-410 (FSWAFLALFRLMTQDYWENLFQLTL) is an intramembrane region (pore-forming). The Extracellular segment spans residues 411–417 (RAAGKTY). A helical transmembrane segment spans residues 418 to 438 (MIFFVVIIFLGSFYLINLILA). Topologically, residues 439-572 (VVAMAYAEQN…HIILLIVMDP (134 aa)) are cytoplasmic. Positions 484–522 (ALEGGEEADGDPTHSKDCNGSLDTSGEKGPPRPSCSAES) are disordered. An II repeat occupies 554–826 (CCAPWVKFKH…QIAIGRIKWG (273 aa)). The helical transmembrane segment at 573–591 (FVDLGITICIVLNTLFMAM) threads the bilayer. At 592-602 (EHYPMTEHFDN) the chain is on the extracellular side. A helical transmembrane segment spans residues 603-622 (VLSVGNLVFTGIFTAEMVLK). Topologically, residues 623-636 (LIAMDPYEYFQQGW) are cytoplasmic. The chain crosses the membrane as a helical span at residues 637-656 (NIFDSFIVTLSLVELGLANV). At 657–658 (QG) the chain is on the extracellular side. The chain crosses the membrane as a helical span at residues 659-676 (LSVLRSFRLLRVFKLAKS). Over 677-692 (WPTLNMLIKIIGNSVG) the chain is Cytoplasmic. A helical transmembrane segment spans residues 693–711 (ALGNLTLVLAIIVFIFAVV). Over 712–740 (GMQLFGKSYKECVCKIASDCSLPRWHMHD) the chain is Extracellular. The cysteines at positions 725 and 731 are disulfide-linked. The segment at residues 741–761 (FFHSFLIVFRILCGEWIETMW) is an intramembrane region (pore-forming). Residues 762-772 (DCMEVAGQAMC) lie on the Extracellular side of the membrane. A disulfide bridge connects residues C763 and C772. Residues 773-791 (LTVFLMVMVIGNLVVLNLF) traverse the membrane as a helical segment. Topologically, residues 792-1026 (LALLLSSFSA…ACFKIVEHNW (235 aa)) are cytoplasmic. Disordered regions lie at residues 854–896 (EPGG…LTDG) and 925–983 (SDLE…EGEL). The span at 867-887 (EDEKKEPPPEDGNKELKDNHI) shows a compositional bias: basic and acidic residues. Composition is skewed to acidic residues over residues 925–941 (SDLEMPTEEETDTFSEP) and 969–983 (EDPEEQAEENPEGEL). Residues 1007 to 1320 (RGKMWWTLRR…KKYYNAMKKL (314 aa)) form an III repeat. The chain crosses the membrane as a helical span at residues 1027-1044 (FETFIVFMILLSSGALAF). The Extracellular portion of the chain corresponds to 1045–1057 (EDIYIEQRRVIRT). The chain crosses the membrane as a helical span at residues 1058–1076 (ILEYADKVFTYIFILEMLL). The Cytoplasmic segment spans residues 1077–1090 (KWVAYGFKVYFTNA). Residues 1091–1109 (WCWLDFLIVDVSIISLVAN) traverse the membrane as a helical segment. At 1110–1117 (WLGYSELG) the chain is on the extracellular side. Residues 1118–1136 (PIKSLRTLRALRPLRALSR) form a helical membrane-spanning segment. The Cytoplasmic segment spans residues 1137-1153 (FEGMRVVVNALLGAIPS). A helical transmembrane segment spans residues 1154–1173 (IMNVLLVCLIFWLIFSIMGV). At 1174–1224 (NLFAGKFYYCINTTTSERFDISVVNNKSECESLMYTGQVRWMNVKVNYDNV) the chain is on the extracellular side. A disulfide bond links C1183 and C1203. N-linked (GlcNAc...) asparagine glycosylation is found at N1185 and N1199. The pore-forming intramembrane region spans 1225 to 1246 (GLGYLSLLQVATFKGWMDIMYA). Residues 1247 to 1263 (AVDSREKEEQPDYEVNL) lie on the Extracellular side of the membrane. A helical membrane pass occupies residues 1264-1285 (YMYLYFVIFIIFGSFFTLNLFI). Residues 1286 to 1348 (GVIIDNFNQQ…MVYDFVTKQV (63 aa)) lie on the Cytoplasmic side of the membrane. Residues 1304–1306 (IFM) are important for rapid channel inactivation. The IV repeat unit spans residues 1329–1627 (IPRPQNKIQG…WEKFDPDATQ (299 aa)). Residues 1349–1366 (FDISIMILICLNMVTMMV) traverse the membrane as a helical segment. Residues 1367–1377 (ETDDQSQLKVD) lie on the Extracellular side of the membrane. Residues 1378-1396 (ILYNINMVFIIVFTGECVL) traverse the membrane as a helical segment. Over 1397 to 1408 (KMFALRHYYFTI) the chain is Cytoplasmic. A helical membrane pass occupies residues 1409–1426 (GWNIFDFVVVILSIVGLA). Residues 1427–1439 (LSDLIQKYFVSPT) lie on the Extracellular side of the membrane. The chain crosses the membrane as a helical span at residues 1440-1456 (LFRVIRLARIGRVLRLI). Residues 1457 to 1475 (RGAKGIRTLLFALMMSLPA) are Cytoplasmic-facing. A helical transmembrane segment spans residues 1476–1493 (LFNIGLLLFLVMFIYSIF). Topologically, residues 1494 to 1515 (GMSNFAYVKKESGIDDMFNFET) are extracellular. The segment at residues 1516 to 1538 (FGNSIICLFEITTSAGWDGLLNP) is an intramembrane region (pore-forming). The Extracellular portion of the chain corresponds to 1539 to 1568 (ILNSGPPDCDPTLENPGTNIKGDCGNPSIG). C1547 and C1562 are oxidised to a cystine. The helical transmembrane segment at 1569–1591 (ICFFCSYIIISFLIVVNMYIAII) threads the bilayer. Residues 1592 to 1841 (LENFNVATEE…VRPGVKESLV (250 aa)) lie on the Cytoplasmic side of the membrane. One can recognise an IQ domain in the interval 1721-1750 (EEVCAIKIQRAYRRHLLQRSVKQASYMYRH). Residues 1776–1794 (SEKEDNGVQSQGEKEKDST) are compositionally biased toward basic and acidic residues. The tract at residues 1776 to 1841 (SEKEDNGVQS…VRPGVKESLV (66 aa)) is disordered. Polar residues predominate over residues 1801-1812 (TEVTAPSSSDTA). Pro residues predominate over residues 1814–1826 (TPPPPSPPPPSSP).

It belongs to the sodium channel (TC 1.A.1.10) family. Nav1.4/SCN4A subfamily. In terms of assembly, the Nav1.4 voltage-gated sodium channel consists of an ion-conducting alpha subunit SCN4A which is functional on its own and a regulatory beta subunit SCN1B. SCN1B strongly enhances the presence of SCN4A at the cell surface. SCN1B is also required for rapid channel inactivation and recovery after inactivation. It prevents the decrease of channel activity in response to repetitive, high-frequency depolarizations. Interacts with the syntrophins SNTA1, SNTB1 and SNTB2 (via PDZ domain); probably links SCN4A to the actin cytoskeleton and the extracellular matrix via the dystrophin-associated protein complex and regulates its localization in muscle cells. Interacts with TMEM233; probable regulator of the channel. In terms of tissue distribution, detected in quadriceps muscle (at protein level). Detected in hind-limb skeletal muscles, but not in heart or brain. Detected at low levels in the myocardium. According to Pubme=26427606 detected also in brain.

It is found in the cell membrane. It carries out the reaction Na(+)(in) = Na(+)(out). The channel is inhibited by tetrodotoxin. In terms of biological role, pore-forming subunit of Nav1.4, a voltage-gated sodium (Nav) channel that directly mediates the depolarizing phase of action potentials in excitable membranes. Navs, also called VGSCs (voltage-gated sodium channels) or VDSCs (voltage-dependent sodium channels), operate by switching between closed and open conformations depending on the voltage difference across the membrane. In the open conformation they allow Na(+) ions to selectively pass through the pore, along their electrochemical gradient. The influx of Na+ ions provokes membrane depolarization, initiating the propagation of electrical signals throughout cells and tissues. Highly expressed in skeletal muscles, Nav1.4 generates the action potential crucial for muscle contraction. In Mus musculus (Mouse), this protein is Sodium channel protein type 4 subunit alpha.